The primary structure comprises 1177 residues: Lysylphosphatidylglycerol biosynthesis bifunctional protein LysX (1177 aa).

2 disordered regions span residues 1–40 (MRRA…AKFV) and 61–85 (VTLA…PRNR). Residues 1 to 676 (MRRAGRSRQF…LLHHDGSAPD (676 aa)) are phosphatidylglycerol lysyltransferase. Low complexity predominate over residues 65–85 (SPGSRSGSGPRSGPRLGPRNR). A run of 6 helical transmembrane segments spans residues 93–113 (VPAA…LGSV), 135–155 (FPDT…ALTA), 159–179 (IAWL…VADI), 189–209 (IFGE…LVLA), 227–247 (AVLV…VELF), and 281–301 (VFLN…ATIV). The disordered stretch occupies residues 673–693 (SAPDVSGLRPERTDAEEARSR). A lysine--tRNA ligase region spans residues 677 to 1177 (VSGLRPERTD…TLPFPLAKPH (501 aa)). The segment covering 681-693 (RPERTDAEEARSR) has biased composition (basic and acidic residues). The OB DNA-binding region spans 738–816 (ITVAGRILRI…SLIVTDWRMI (79 aa)). Positions 1089 and 1096 each coordinate Mg(2+).

The protein in the N-terminal section; belongs to the LPG synthetase family. It in the C-terminal section; belongs to the class-II aminoacyl-tRNA synthetase family. Requires Mg(2+) as cofactor.

Its subcellular location is the cell membrane. The catalysed reaction is tRNA(Lys) + L-lysine + ATP = L-lysyl-tRNA(Lys) + AMP + diphosphate. It carries out the reaction L-lysyl-tRNA(Lys) + a 1,2-diacyl-sn-glycero-3-phospho-(1'-sn-glycerol) = a 1,2-diacyl-sn-glycero-3-phospho-1'-(3'-O-L-lysyl)-sn-glycerol + tRNA(Lys). Its function is as follows. Catalyzes the production of L-lysyl-tRNA(Lys)transfer and the transfer of a lysyl group from L-lysyl-tRNA(Lys) to membrane-bound phosphatidylglycerol (PG), which produces lysylphosphatidylglycerol (LPG), one of the components of the bacterial membrane with a positive net charge. LPG synthesis contributes to the resistance to cationic antimicrobial peptides (CAMPs) and likely protects M.tuberculosis against the CAMPs produced by competiting microorganisms (bacteriocins). In fact, the modification of anionic phosphatidylglycerol with positively charged L-lysine results in repulsion of the peptides. In Mycolicibacterium paratuberculosis (strain ATCC BAA-968 / K-10) (Mycobacterium paratuberculosis), this protein is Lysylphosphatidylglycerol biosynthesis bifunctional protein LysX (lysX).